We begin with the raw amino-acid sequence, 377 residues long: Prostaglandin E synthase 2 (377 aa).

The Lumenal portion of the chain corresponds to 1–57; it reads MDPAARVVRALWPGGCALAWRLGGRPQPLLPTQSRAGFAGAAGGPSPVAAARKGSPR. A helical transmembrane segment spans residues 58–74; it reads LLGAAALALGGALGLYH. Over 75–377 the chain is Cytoplasmic; the sequence is TARWHLRAQD…RAITEASPAH (303 aa). The 104-residue stretch at 90-193 folds into the Glutaredoxin domain; that stretch reads SAAQLSLSSR…EIITYYPAMK (104 aa). Serine 95 bears the Phosphoserine mark. Residues valine 148 and 164-165 contribute to the glutathione site; that span reads DS. In terms of domain architecture, GST C-terminal spans 263-377; that stretch reads YIVREGKFGA…RAITEASPAH (115 aa).

The protein belongs to the GST superfamily. In terms of assembly, homodimer. May interact with CEBPB. Interacts with EXOSC10. Post-translationally, synthesized as a Golgi membrane-associated protein, and the proteolytic removal of the N-terminal hydrophobic domain leads to the formation of a mature cytosolic enzyme. In terms of tissue distribution, widely expressed. Expressed in the heart, including apex, inter-ventricular septum, both atria and ventricles, but not in the aorta. Also expressed in fetal heart. Detected in various regions of the brain: cerebellum; occipital, frontal and parietal lobes. Also expressed in the lymph nodes, skeletal muscle, kidney and trachea, but not in the thymus or lung. Overexpressed in colorectal cancer.

The protein localises to the golgi apparatus membrane. It localises to the cytoplasm. The protein resides in the perinuclear region. The catalysed reaction is prostaglandin H2 = prostaglandin E2. The enzyme catalyses prostaglandin H2 = (12S)-hydroxy-(5Z,8E,10E)-heptadecatrienoate + malonaldehyde. The protein operates within lipid metabolism; prostaglandin biosynthesis. Its activity is regulated as follows. Isomerase activity is increased by sulfhydril compounds. Dithiothreitol (DTT) is most effective, followed by dihydrolipoic acid, glutathione (GSH) and 2-mercaptoethanol. Isomerase that catalyzes the conversion of PGH2 into the more stable prostaglandin E2 (PGE2) (in vitro). The biological function and the GSH-dependent property of PTGES2 is still under debate. In vivo, PTGES2 could form a complex with GSH and heme and would not participate in PGE2 synthesis but would catalyze the degradation of prostaglandin E2 H2 (PGH2) to 12(S)-hydroxy-5(Z),8(E),10(E)-heptadecatrienoic acid (HHT) and malondialdehyde (MDA). In Homo sapiens (Human), this protein is Prostaglandin E synthase 2 (PTGES2).